We begin with the raw amino-acid sequence, 314 residues long: Olfactory receptor 8D4 (314 aa).

The Extracellular segment spans residues 1-25 (MGVKNHSTVTEFLLSGLTEQAELQL). Asparagine 5 is a glycosylation site (N-linked (GlcNAc...) asparagine). The helical transmembrane segment at 26 to 46 (PLFCLFLGIYTVTVVGNLSMI) threads the bilayer. Residues 47–54 (SIIRLNRQ) are Cytoplasmic-facing. The chain crosses the membrane as a helical span at residues 55–75 (LHTPMYYFLSSLSFLDFCYSS). Over 76–99 (VITPKMLSGFLCRDRSISYSGCMI) the chain is Extracellular. A disulfide bond links cysteine 97 and cysteine 189. A helical transmembrane segment spans residues 100 to 120 (QLFFFCVCVISECYMLAAMAC). Over 121 to 139 (DRYVAICSPLLYRVIMSPR) the chain is Cytoplasmic. A helical transmembrane segment spans residues 140–160 (VCSLLVAAVFSVGFTDAVIHG). At 161–197 (GCILRLSFCGSNIIKHYFCDIVPLIKLSCSSTYIDEL) the chain is on the extracellular side. Residues 198-217 (LIFVIGGFNMVATSLTIIIS) form a helical membrane-spanning segment. Residues 218-237 (YAFILTSILRIHSKKGRCKA) lie on the Cytoplasmic side of the membrane. Residues 238–258 (FSTCSSHLTAVLMFYGSLMSM) form a helical membrane-spanning segment. Topologically, residues 259-271 (YLKPASSSSLTQE) are extracellular. Residues 272–292 (KVSSVFYTTVILMLNPLIYSL) form a helical membrane-spanning segment. Topologically, residues 293–314 (RNNEVRNALMKLLRRKISLSPG) are cytoplasmic.

The protein belongs to the G-protein coupled receptor 1 family.

Its subcellular location is the cell membrane. In terms of biological role, odorant receptor. This chain is Olfactory receptor 8D4 (OR8D4), found in Homo sapiens (Human).